The sequence spans 267 residues: NAD kinase 2 (267 aa).

Residue Asp-52 is the Proton acceptor of the active site. Residues 52 to 53 (DG), 124 to 125 (NE), Arg-151, Asp-153, 164 to 169 (TGYNKS), and Ala-188 each bind NAD(+).

It belongs to the NAD kinase family. A divalent metal cation serves as cofactor.

The protein localises to the cytoplasm. It carries out the reaction NAD(+) + ATP = ADP + NADP(+) + H(+). Involved in the regulation of the intracellular balance of NAD and NADP, and is a key enzyme in the biosynthesis of NADP. Catalyzes specifically the phosphorylation on 2'-hydroxyl of the adenosine moiety of NAD to yield NADP. The protein is NAD kinase 2 of Geobacillus kaustophilus (strain HTA426).